The chain runs to 141 residues: VLSGEDKNNIKTAWGKIGGHAAEYGAEALERMFVVYPTTKTYFPHFDVSHGSGQVKAHGKKVADALTTAVGHLDDLPGALSALSDLHAHKLRVDPVNFKLLSHCLLVTLANHIPADFTPAVHASLDKFLASVSTVLTSKYR.

One can recognise a Globin domain in the interval 1–141 (VLSGEDKNNI…VSTVLTSKYR (141 aa)). Serine 3 is modified (phosphoserine). N6-succinyllysine occurs at positions 7 and 11. Residue lysine 16 is modified to N6-acetyllysine; alternate. At lysine 16 the chain carries N6-succinyllysine; alternate. At tyrosine 24 the chain carries Phosphotyrosine. The residue at position 40 (lysine 40) is an N6-succinyllysine. The residue at position 49 (serine 49) is a Phosphoserine. Histidine 58 is a binding site for O2. Heme b is bound at residue histidine 87. The residue at position 102 (serine 102) is a Phosphoserine. Residue threonine 108 is modified to Phosphothreonine. Phosphoserine occurs at positions 124 and 131. Phosphothreonine occurs at positions 134 and 137. Serine 138 carries the phosphoserine modification.

It belongs to the globin family. Heterotetramer of two alpha chains and two beta chains. Red blood cells.

Functionally, involved in oxygen transport from the lung to the various peripheral tissues. Hemopressin acts as an antagonist peptide of the cannabinoid receptor CNR1. Hemopressin-binding efficiently blocks cannabinoid receptor CNR1 and subsequent signaling. The polypeptide is Hemoglobin subunit alpha (HBA) (Ondatra zibethicus (Muskrat)).